A 184-amino-acid polypeptide reads, in one-letter code: uncharacterized protein (184 aa).

It belongs to the PhzF family.

The protein resides in the cytoplasm. The protein localises to the nucleus. This is an uncharacterized protein from Schizosaccharomyces pombe (strain 972 / ATCC 24843) (Fission yeast).